A 375-amino-acid polypeptide reads, in one-letter code: MKSLITPIAAGLLLAFSQYSLAADTGGYTKTDGGDVSGAVKKTASSMQDIVNIIEAAKVDANGKKVKGGAYPLVITYTGNEDSLINAAAANICGQWSKDARGVEIKDFTKGLTIIGANGSSANFGIWIVNSSDIVVRNMRIGYLPGGAQDGDMFRIDNSPNVWLDHNELFAANHECDGTKDGDTTFESAIDIKKGATYVTISYNYIHGVKKVGLSGFSSSDTAERNITYHHNIYSDVNARLPLQRGGNVHAYNNLYTGITSSGLNVRQNGKALIENNWFENAVSPVTSRYDGSNFGTWVLKGNNITKPADFATYNITWTPDTKEYRNADTWTSTGTYPTVPYSYSPVSAQCVKDKLANYAGVGKNLATLASSACK.

The first 22 residues, 1–22 (MKSLITPIAAGLLLAFSQYSLA), serve as a signal peptide directing secretion. Residues cysteine 93 and cysteine 176 are joined by a disulfide bond. 4 residues coordinate Ca(2+): aspartate 150, aspartate 152, glutamate 187, and aspartate 191. Arginine 240 is a catalytic residue. Cysteine 351 and cysteine 374 form a disulfide bridge.

The protein belongs to the polysaccharide lyase 1 family. PLADES subfamily. Ca(2+) serves as cofactor.

The protein resides in the secreted. It catalyses the reaction Eliminative cleavage of (1-&gt;4)-alpha-D-galacturonan to give oligosaccharides with 4-deoxy-alpha-D-galact-4-enuronosyl groups at their non-reducing ends.. It participates in glycan metabolism; pectin degradation; 2-dehydro-3-deoxy-D-gluconate from pectin: step 2/5. Involved in maceration and soft-rotting of plant tissue. The protein is Pectate lyase B (pelB) of Dickeya chrysanthemi (Pectobacterium chrysanthemi).